The primary structure comprises 322 residues: Germ cell-specific gene 1-like protein (322 aa).

Residues 1–8 (MKTSRRGR) lie on the Cytoplasmic side of the membrane. Residues 9 to 29 (ALLAVALNLLALLFATTAFLT) form a helical membrane-spanning segment. At 30-122 (TYWCQGTQRV…FIDLAPASEK (93 aa)) the chain is on the extracellular side. A helical membrane pass occupies residues 123-143 (GVLWLSVVSEVLYILLLVVGF). Over 144-163 (SLMCLELLHSSSVIDGLKLN) the chain is Cytoplasmic. The helical transmembrane segment at 164-184 (AFAAVFTVLSGLLGMVAHMMY) threads the bilayer. The Extracellular portion of the chain corresponds to 185–207 (TQVFQVTVSLGPEDWRPHSWDYG). Residues 208 to 228 (WSFCLAWGSFTCCMAASVTTL) traverse the membrane as a helical segment. At 229 to 322 (NSYTKTVIEF…RQCWVLGHWV (94 aa)) the chain is on the cytoplasmic side. S274 carries the post-translational modification Phosphoserine.

This sequence belongs to the GSG1 family. In terms of assembly, component of the inner core of AMPAR complexes. AMPAR complexes consist of an inner core made of 4 pore-forming GluA/GRIA proteins (GRIA1, GRIA2, GRIA3 and GRIA4) and 4 major auxiliary subunits arranged in a twofold symmetry. One of the two pairs of distinct binding sites is occupied either by CNIH2, CNIH3 or CACNG2, CACNG3. The other harbors CACNG2, CACNG3, CACNG4, CACNG8 or GSG1L. This inner core of AMPAR complexes is complemented by outer core constituents binding directly to the GluA/GRIA proteins at sites distinct from the interaction sites of the inner core constituents. Outer core constituents include at least PRRT1, PRRT2, CKAMP44/SHISA9, FRRS1L and NRN1. The proteins of the inner and outer core serve as a platform for other, more peripherally associated AMPAR constituents. Alone or in combination, these auxiliary subunits control the gating and pharmacology of the AMPAR complexes and profoundly impact their biogenesis and protein processing. Expressed in the brain (at protein level).

It is found in the cell membrane. It localises to the synapse. Functionally, as a component of the inner core of AMPAR complexes, modifies AMPA receptor (AMPAR) gating. This Rattus norvegicus (Rat) protein is Germ cell-specific gene 1-like protein (Gsg1l).